Consider the following 320-residue polypeptide: ATP-dependent 6-phosphofructokinase (320 aa).

G12 serves as a coordination point for ATP. ADP contacts are provided by residues 22–26 and 55–60; these read RGVVR and RYSVSD. Residues 73 to 74 and 103 to 106 each bind ATP; these read RF and GDGS. D104 contacts Mg(2+). Substrate is bound at residue 126–128; that stretch reads TID. The active-site Proton acceptor is D128. Residue R155 coordinates ADP. Substrate is bound by residues R163 and 170–172; that span reads MGR. Residues 186–188, K212, and 214–216 contribute to the ADP site; these read GCE and KKH. Residues E223, R244, and 250–253 each bind substrate; that span reads HIQR.

Belongs to the phosphofructokinase type A (PFKA) family. ATP-dependent PFK group I subfamily. Prokaryotic clade 'B1' sub-subfamily. In terms of assembly, homotetramer. Mg(2+) is required as a cofactor.

The protein localises to the cytoplasm. The enzyme catalyses beta-D-fructose 6-phosphate + ATP = beta-D-fructose 1,6-bisphosphate + ADP + H(+). The protein operates within carbohydrate degradation; glycolysis; D-glyceraldehyde 3-phosphate and glycerone phosphate from D-glucose: step 3/4. With respect to regulation, allosterically activated by ADP and other diphosphonucleosides, and allosterically inhibited by phosphoenolpyruvate. Functionally, catalyzes the phosphorylation of D-fructose 6-phosphate to fructose 1,6-bisphosphate by ATP, the first committing step of glycolysis. The sequence is that of ATP-dependent 6-phosphofructokinase from Buchnera aphidicola subsp. Acyrthosiphon pisum (strain 5A).